The chain runs to 882 residues: Valine--tRNA ligase (882 aa).

The short motif at 45 to 55 (PNVTGSLHIGH) is the 'HIGH' region element. Positions 525–529 (KFSKS) match the 'KMSKS' region motif. Lysine 528 contributes to the ATP binding site. A coiled-coil region spans residues 812–881 (EGLIDVAKEK…VLKKGIQNLA (70 aa)).

It belongs to the class-I aminoacyl-tRNA synthetase family. ValS type 1 subfamily. In terms of assembly, monomer.

It is found in the cytoplasm. The catalysed reaction is tRNA(Val) + L-valine + ATP = L-valyl-tRNA(Val) + AMP + diphosphate. Functionally, catalyzes the attachment of valine to tRNA(Val). As ValRS can inadvertently accommodate and process structurally similar amino acids such as threonine, to avoid such errors, it has a 'posttransfer' editing activity that hydrolyzes mischarged Thr-tRNA(Val) in a tRNA-dependent manner. This chain is Valine--tRNA ligase, found in Leptospira interrogans serogroup Icterohaemorrhagiae serovar Lai (strain 56601).